A 422-amino-acid chain; its full sequence is Adenylosuccinate synthetase (422 aa).

Residues 11-17 (GDEGKGK) and 39-41 (GHT) each bind GTP. The active-site Proton acceptor is the D12. Residues D12 and G39 each contribute to the Mg(2+) site. Residues 12–15 (DEGK), 37–40 (NAGH), T129, R143, N220, T235, and R299 contribute to the IMP site. Residue H40 is the Proton donor of the active site. Substrate is bound at residue 295-301 (VTTGRKR). Residues R301, 327–329 (KLD), and 410–412 (GTG) each bind GTP.

This sequence belongs to the adenylosuccinate synthetase family. Homodimer. The cofactor is Mg(2+).

It localises to the cytoplasm. It catalyses the reaction IMP + L-aspartate + GTP = N(6)-(1,2-dicarboxyethyl)-AMP + GDP + phosphate + 2 H(+). It participates in purine metabolism; AMP biosynthesis via de novo pathway; AMP from IMP: step 1/2. Plays an important role in the de novo pathway and in the salvage pathway of purine nucleotide biosynthesis. Catalyzes the first committed step in the biosynthesis of AMP from IMP. This is Adenylosuccinate synthetase from Arthroderma otae (strain ATCC MYA-4605 / CBS 113480) (Microsporum canis).